A 358-amino-acid polypeptide reads, in one-letter code: Probable cinnamyl alcohol dehydrogenase (358 aa).

C48 is a binding site for Zn(2+). S50 is an NADP(+) binding site. The Zn(2+) site is built by H70, E71, C101, C104, C107, C115, and C164. Residues T168, G189–G194, S212–K217, T252, G276, and S299–V301 contribute to the NADP(+) site.

This sequence belongs to the zinc-containing alcohol dehydrogenase family. Homodimer. Zn(2+) serves as cofactor. In terms of tissue distribution, most actively expressed in stem, hypocotyl and root tissue.

It catalyses the reaction (E)-cinnamyl alcohol + NADP(+) = (E)-cinnamaldehyde + NADPH + H(+). The catalysed reaction is (E)-coniferol + NADP(+) = (E)-coniferaldehyde + NADPH + H(+). The enzyme catalyses (E)-sinapyl alcohol + NADP(+) = (E)-sinapaldehyde + NADPH + H(+). It carries out the reaction (E)-4-coumaroyl alcohol + NADP(+) = (E)-4-coumaraldehyde + NADPH + H(+). It catalyses the reaction (E)-caffeyl alcohol + NADP(+) = (E)-caffeyl aldehyde + NADPH + H(+). Its pathway is aromatic compound metabolism; phenylpropanoid biosynthesis. In terms of biological role, this protein catalyzes the final step in a branch of phenylpropanoid synthesis specific for production of lignin monomers. It acts on coniferyl-, sinapyl-, 4-coumaryl- and cinnamyl-alcohol. In Medicago sativa (Alfalfa), this protein is Probable cinnamyl alcohol dehydrogenase (CAD2).